Reading from the N-terminus, the 142-residue chain is Nucleoside diphosphate kinase (142 aa).

6 residues coordinate ATP: K9, F57, R85, T91, R102, and N112. H115 serves as the catalytic Pros-phosphohistidine intermediate.

The protein belongs to the NDK family. As to quaternary structure, homotetramer. The cofactor is Mg(2+).

Its subcellular location is the cytoplasm. It catalyses the reaction a 2'-deoxyribonucleoside 5'-diphosphate + ATP = a 2'-deoxyribonucleoside 5'-triphosphate + ADP. It carries out the reaction a ribonucleoside 5'-diphosphate + ATP = a ribonucleoside 5'-triphosphate + ADP. Functionally, major role in the synthesis of nucleoside triphosphates other than ATP. The ATP gamma phosphate is transferred to the NDP beta phosphate via a ping-pong mechanism, using a phosphorylated active-site intermediate. The chain is Nucleoside diphosphate kinase from Dehalococcoides mccartyi (strain CBDB1).